The sequence spans 250 residues: Proteasome subunit alpha type-7 (250 aa).

Belongs to the peptidase T1A family. In terms of assembly, the 26S proteasome consists of a 20S proteasome core and two 19S regulatory subunits. The 20S proteasome core is composed of 28 subunits that are arranged in four stacked rings, resulting in a barrel-shaped structure. The two end rings are each formed by seven alpha subunits, and the two central rings are each formed by seven beta subunits. The catalytic chamber with the active sites is on the inside of the barrel.

The protein resides in the cytoplasm. It localises to the nucleus. In terms of biological role, the proteasome is a multicatalytic proteinase complex which is characterized by its ability to cleave peptides with Arg, Phe, Tyr, Leu, and Glu adjacent to the leaving group at neutral or slightly basic pH. The proteasome has an ATP-dependent proteolytic activity. This chain is Proteasome subunit alpha type-7 (psmA7), found in Dictyostelium discoideum (Social amoeba).